The chain runs to 161 residues: MRIGYGFDLHAFGSTKPLIIGGVLIPCEKGLIAHSNGDLLIHSLIDALLGATAMGDIGSFFPSNNYIYKNIDSRILLKKIWNKIILLNYDICNIDITIIAEYPKMLPYIFFMRSNLSLDLNTEIDNISIKSTTSKKIGCIGRKEAIACHSIVMLIKNKKCI.

Positions 8 and 10 each coordinate a divalent metal cation. 4-CDP-2-C-methyl-D-erythritol 2-phosphate contacts are provided by residues 8 to 10 (DLH) and 34 to 35 (HS). His-42 provides a ligand contact to a divalent metal cation. 4-CDP-2-C-methyl-D-erythritol 2-phosphate contacts are provided by residues 56 to 58 (DIG), 100 to 106 (AEYPKML), and Arg-142.

This sequence belongs to the IspF family. As to quaternary structure, homotrimer. The cofactor is a divalent metal cation.

The catalysed reaction is 4-CDP-2-C-methyl-D-erythritol 2-phosphate = 2-C-methyl-D-erythritol 2,4-cyclic diphosphate + CMP. It functions in the pathway isoprenoid biosynthesis; isopentenyl diphosphate biosynthesis via DXP pathway; isopentenyl diphosphate from 1-deoxy-D-xylulose 5-phosphate: step 4/6. In terms of biological role, involved in the biosynthesis of isopentenyl diphosphate (IPP) and dimethylallyl diphosphate (DMAPP), two major building blocks of isoprenoid compounds. Catalyzes the conversion of 4-diphosphocytidyl-2-C-methyl-D-erythritol 2-phosphate (CDP-ME2P) to 2-C-methyl-D-erythritol 2,4-cyclodiphosphate (ME-CPP) with a corresponding release of cytidine 5-monophosphate (CMP). In Buchnera aphidicola subsp. Acyrthosiphon pisum (strain 5A), this protein is 2-C-methyl-D-erythritol 2,4-cyclodiphosphate synthase.